We begin with the raw amino-acid sequence, 388 residues long: Lipid-A-disaccharide synthase (388 aa).

The protein belongs to the LpxB family.

It carries out the reaction a lipid X + a UDP-2-N,3-O-bis[(3R)-3-hydroxyacyl]-alpha-D-glucosamine = a lipid A disaccharide + UDP + H(+). Its pathway is bacterial outer membrane biogenesis; LPS lipid A biosynthesis. In terms of biological role, condensation of UDP-2,3-diacylglucosamine and 2,3-diacylglucosamine-1-phosphate to form lipid A disaccharide, a precursor of lipid A, a phosphorylated glycolipid that anchors the lipopolysaccharide to the outer membrane of the cell. This chain is Lipid-A-disaccharide synthase, found in Saccharophagus degradans (strain 2-40 / ATCC 43961 / DSM 17024).